The primary structure comprises 179 residues: UPF0227 protein VC0395_A1482/VC395_2007 (179 aa).

It belongs to the UPF0227 family.

The polypeptide is UPF0227 protein VC0395_A1482/VC395_2007 (Vibrio cholerae serotype O1 (strain ATCC 39541 / Classical Ogawa 395 / O395)).